The chain runs to 215 residues: Beta-crystallin A3-2 (215 aa).

Residues 1–30 (MEIPAIQTEREDITSEKMAQINPLPVPLGP) are N-terminal arm. 2 Beta/gamma crystallin 'Greek key' domains span residues 31–70 (WKIT…KVEC) and 71–117 (GAWI…RPIC). Residues 118–123 (SANHEE) form a connecting peptide region. 2 consecutive Beta/gamma crystallin 'Greek key' domains span residues 124-165 (SKLV…KVQC) and 166-214 (GAWV…RRIQ).

It belongs to the beta/gamma-crystallin family. As to quaternary structure, homo/heterodimer, or complexes of higher-order. The structure of beta-crystallin oligomers seems to be stabilized through interactions between the N-terminal arms. The N-terminus is blocked.

Its function is as follows. Crystallins are the dominant structural components of the vertebrate eye lens. The sequence is that of Beta-crystallin A3-2 from Aquarana catesbeiana (American bullfrog).